A 255-amino-acid polypeptide reads, in one-letter code: tRNA (guanine-N(7)-)-methyltransferase (255 aa).

The tract at residues Met1 to His37 is disordered. S-adenosyl-L-methionine contacts are provided by Glu80, Glu105, Asp132, and Asp154. The active site involves Asp154. Residues Lys158 and Asp190 each contribute to the substrate site.

This sequence belongs to the class I-like SAM-binding methyltransferase superfamily. TrmB family.

It catalyses the reaction guanosine(46) in tRNA + S-adenosyl-L-methionine = N(7)-methylguanosine(46) in tRNA + S-adenosyl-L-homocysteine. It participates in tRNA modification; N(7)-methylguanine-tRNA biosynthesis. Catalyzes the formation of N(7)-methylguanine at position 46 (m7G46) in tRNA. The chain is tRNA (guanine-N(7)-)-methyltransferase from Nitrobacter hamburgensis (strain DSM 10229 / NCIMB 13809 / X14).